Consider the following 510-residue polypeptide: Maturase K (510 aa).

This sequence belongs to the intron maturase 2 family. MatK subfamily.

The protein localises to the plastid. In terms of biological role, usually encoded in the trnK tRNA gene intron. Probably assists in splicing its own and other chloroplast group II introns. The chain is Maturase K from Bartsia alpina (Velvet bells).